Reading from the N-terminus, the 568-residue chain is Periplasmic trehalase (568 aa).

Residues 1-39 form the signal peptide; that stretch reads MPHVVARSGDVMSSAAPPSCTSLLGLSLSMFVAPCTLTA. Residues arginine 169, 176 to 177, asparagine 213, 222 to 224, 294 to 296, and glycine 327 contribute to the substrate site; these read WD, RSQ, and RPE. Catalysis depends on proton donor/acceptor residues aspartate 329 and glutamate 511. Residue glutamate 526 participates in substrate binding.

The protein belongs to the glycosyl hydrolase 37 family.

It localises to the periplasm. The catalysed reaction is alpha,alpha-trehalose + H2O = alpha-D-glucose + beta-D-glucose. Provides the cells with the ability to utilize trehalose at high osmolarity by splitting it into glucose molecules that can subsequently be taken up by the phosphotransferase-mediated uptake system. The sequence is that of Periplasmic trehalase from Xanthomonas oryzae pv. oryzae (strain MAFF 311018).